The chain runs to 135 residues: Snaclec rhodocetin subunit gamma (135 aa).

3 disulfide bridges follow: Cys-4-Cys-15, Cys-32-Cys-129, and Cys-104-Cys-121. The 120-residue stretch at 11 to 130 (YDQHCYQAFN…CQAKNPFVCK (120 aa)) folds into the C-type lectin domain.

The protein belongs to the snaclec family. As to quaternary structure, heterotetramer of subunit alpha, beta, gamma and delta; only the gamma and the delta subunits are disulfide-linked. Alpha-beta heterodimer and gamma-delta heterodimer associate orthogonally, giving a cruciform conformation. This heterotetramer may covalently dimerizes thanks to the gamma subunit. Expressed by the venom gland.

It localises to the secreted. Potent inhibitor of collagen-induced platelet aggregation. It acts by binding to the integrin alpha2A domain and blocks collagen binding to integrin alpha-2/beta-1 (ITGA2/ITGB1). The gamma/delta subunits mainly contribute to this activity. The polypeptide is Snaclec rhodocetin subunit gamma (Calloselasma rhodostoma (Malayan pit viper)).